The following is a 512-amino-acid chain: Cytochrome P450 monooxygenase ABA1 (512 aa).

A helical membrane pass occupies residues 13–32 (HWLSGILAIATVYLATSYII). Position 458 (C458) interacts with heme.

Belongs to the cytochrome P450 family. Requires heme as cofactor.

Its subcellular location is the membrane. It functions in the pathway hormone biosynthesis. In terms of biological role, cytochrome P450 monooxygenase involved in the biosynthesis of abscisic acid (ABA), a phytohormone that acts antagonistically toward salicylic acid (SA), jasmonic acid (JA) and ethylene (ETH) signaling, to impede plant defense responses. During pathogen-host interaction, ABA plays a dual role in disease severity by increasing plant susceptibility and accelerating pathogenesis in the fungus itself. The first step of the pathway catalyzes the reaction from farnesyl diphosphate to alpha-ionylideneethane performed by the alpha-ionylideneethane synthase ABA3 via a three-step reaction mechanism involving 2 neutral intermediates, beta-farnesene and allofarnesene. The cytochrome P450 monooxygenase ABA1 might then be involved in the conversion of alpha-ionylideneethane to alpha-ionylideneacetic acid. Alpha-ionylideneacetic acid is further converted to abscisic acid in 2 steps involving the cytochrome P450 monooxygenase ABA2 and the short-chain dehydrogenase/reductase ABA4, via the intermediates 1'-deoxy-ABA or 1',4'-trans-diol-ABA, depending on the order of action of these 2 enzymes. ABA2 is responsible for the hydroxylation of carbon atom C-1' and ABA4 might be involved in the oxidation of the C-4' carbon atom. This Pyricularia oryzae (strain Y34) (Rice blast fungus) protein is Cytochrome P450 monooxygenase ABA1.